A 179-amino-acid chain; its full sequence is Interleukin-10 (179 aa).

The signal sequence occupies residues 1 to 19 (MPSSSALLCCLVFLAGVAA). 2 disulfides stabilise this stretch: cysteine 31/cysteine 127 and cysteine 81/cysteine 133. Asparagine 135 is a glycosylation site (N-linked (GlcNAc...) asparagine).

The protein belongs to the IL-10 family. In terms of assembly, homodimer. Interacts with IL10RA and IL10RB.

The protein resides in the secreted. In terms of biological role, major immune regulatory cytokine that acts on many cells of the immune system where it has profound anti-inflammatory functions, limiting excessive tissue disruption caused by inflammation. Mechanistically, IL10 binds to its heterotetrameric receptor comprising IL10RA and IL10RB leading to JAK1 and STAT2-mediated phosphorylation of STAT3. In turn, STAT3 translocates to the nucleus where it drives expression of anti-inflammatory mediators. Targets antigen-presenting cells (APCs) such as macrophages and monocytes and inhibits their release of pro-inflammatory cytokines including granulocyte-macrophage colony-stimulating factor /GM-CSF, granulocyte colony-stimulating factor/G-CSF, IL-1 alpha, IL-1 beta, IL-6, IL-8 and TNF-alpha. Also interferes with antigen presentation by reducing the expression of MHC-class II and co-stimulatory molecules, thereby inhibiting their ability to induce T cell activation. In addition, controls the inflammatory response of macrophages by reprogramming essential metabolic pathways including mTOR signaling. This Cervus elaphus (Red deer) protein is Interleukin-10 (IL10).